Consider the following 904-residue polypeptide: Auxilin-related protein 1 (904 aa).

Disordered regions lie at residues 46-99 (AAGK…FDYD), 150-731 (SSIS…NLRK), and 749-776 (SASQ…RHQR). Basic and acidic residues predominate over residues 59 to 69 (DPGRDGDDLLF). Positions 81–95 (YGSSSGDSRSPSAPA) are enriched in low complexity. Residues 178-188 (KGADSDREEKG) are compositionally biased toward basic and acidic residues. Residues 201–215 (RTSSPPSKRTTSETT) are compositionally biased toward low complexity. Residues 232 to 244 (VEEDPFVVLEESE) show a composition bias toward acidic residues. Basic and acidic residues predominate over residues 245 to 271 (STPREPSRTDPLDDIGKFNSRKTDHSS). Over residues 370–383 (SAPPPTRPPPPRPT) the composition is skewed to pro residues. The segment covering 394-419 (SIPTSAYHSHVPSSGRASVNSPTASQ) has biased composition (polar residues). Residues 456 to 663 (SAAAMKDAMD…AAAEARGRAA (208 aa)) are a coiled coil. 2 stretches are compositionally biased toward basic and acidic residues: residues 462–570 (DAMD…EAHA) and 581–660 (TDAR…EARG). The R domain maps to 619 to 640 (REKAEKAAAEAKERANAEAREK). Residues 661–673 (RAAAQAKAKQQQE) are compositionally biased toward low complexity. Polar residues predominate over residues 674-697 (NTNDLDSFFSSISRPNSAPRQRTN). Positions 762-804 (ETEERRRARLERHQRTQERAAKALAEKNERDLQVQREQVEKDR) form a coiled coil. The span at 764–776 (EERRRARLERHQR) shows a compositional bias: basic and acidic residues. The J domain maps to 839–904 (CGWQPVSLTD…WNKFNSEELF (66 aa)).

In terms of assembly, interacts with SH3P1.

Its subcellular location is the cell membrane. The protein resides in the golgi apparatus. The protein localises to the trans-Golgi network. It localises to the endoplasmic reticulum. It is found in the cytoplasmic vesicle. Its function is as follows. Promotes uncoating of clathrin-coated vesicles. May interact directly with clathrin. In Arabidopsis thaliana (Mouse-ear cress), this protein is Auxilin-related protein 1.